The sequence spans 196 residues: Glycerol-3-phosphate acyltransferase (196 aa).

Helical transmembrane passes span 3–23 (NAVFVIAAYLLGSISFGILVS), 78–98 (VGVVCWVAVAVFLGHLYPVFY), 112–132 (VLLAFSPLLAGLALLSWIVVF), and 154–174 (WLLLPQIGYIIVVFVLSLLLI).

This sequence belongs to the PlsY family. Probably interacts with PlsX.

The protein localises to the cell inner membrane. It carries out the reaction an acyl phosphate + sn-glycerol 3-phosphate = a 1-acyl-sn-glycero-3-phosphate + phosphate. It participates in lipid metabolism; phospholipid metabolism. Its function is as follows. Catalyzes the transfer of an acyl group from acyl-phosphate (acyl-PO(4)) to glycerol-3-phosphate (G3P) to form lysophosphatidic acid (LPA). This enzyme utilizes acyl-phosphate as fatty acyl donor, but not acyl-CoA or acyl-ACP. The sequence is that of Glycerol-3-phosphate acyltransferase from Methylobacillus flagellatus (strain ATCC 51484 / DSM 6875 / VKM B-1610 / KT).